A 623-amino-acid polypeptide reads, in one-letter code: Translation initiation factor IF-2 (623 aa).

Over residues 1–18 (MTLNKKTNNENSSKTTPK) the composition is skewed to low complexity. Disordered regions lie at residues 1 to 21 (MTLN…KLSK) and 92 to 115 (PQKE…KLQA). One can recognise a tr-type G domain in the interval 125-293 (KTPPIVTIMG…ILLFSEIQNL (169 aa)). The tract at residues 134–141 (GHVDHGKT) is G1. Residue 134-141 (GHVDHGKT) coordinates GTP. The G2 stretch occupies residues 159–163 (GITQH). Residues 180 to 183 (DTPG) are G3. GTP is bound by residues 180–184 (DTPGH) and 234–237 (NKVD). The segment at 234 to 237 (NKVD) is G4. Positions 270-272 (SAL) are G5.

It belongs to the TRAFAC class translation factor GTPase superfamily. Classic translation factor GTPase family. IF-2 subfamily.

It localises to the cytoplasm. Its function is as follows. One of the essential components for the initiation of protein synthesis. Protects formylmethionyl-tRNA from spontaneous hydrolysis and promotes its binding to the 30S ribosomal subunits. Also involved in the hydrolysis of GTP during the formation of the 70S ribosomal complex. The polypeptide is Translation initiation factor IF-2 (Aster yellows witches'-broom phytoplasma (strain AYWB)).